The sequence spans 207 residues: High frequency lysogenization protein HflD homolog (207 aa).

Belongs to the HflD family.

The protein localises to the cytoplasm. The protein resides in the cell inner membrane. In Azotobacter vinelandii (strain DJ / ATCC BAA-1303), this protein is High frequency lysogenization protein HflD homolog.